A 37-amino-acid chain; its full sequence is Cytochrome b6-f complex subunit 5 (37 aa).

Residues 5-25 (LLSGIVLGLIVVTLAGLFYAA) form a helical membrane-spanning segment.

The protein belongs to the PetG family. The 4 large subunits of the cytochrome b6-f complex are cytochrome b6, subunit IV (17 kDa polypeptide, PetD), cytochrome f and the Rieske protein, while the 4 small subunits are PetG, PetL, PetM and PetN. The complex functions as a dimer.

Its subcellular location is the cellular thylakoid membrane. Functionally, component of the cytochrome b6-f complex, which mediates electron transfer between photosystem II (PSII) and photosystem I (PSI), cyclic electron flow around PSI, and state transitions. PetG is required for either the stability or assembly of the cytochrome b6-f complex. The chain is Cytochrome b6-f complex subunit 5 from Anabaena variabilis.